Reading from the N-terminus, the 158-residue chain is Oocyte-secreted protein 2 (158 aa).

The first 17 residues, 1–17 (MALEVLMLLAVLIWTGA), serve as a signal peptide directing secretion.

It belongs to the PLAC1 family. Highly expressed in oocytes.

Its subcellular location is the secreted. It is found in the cytoplasm. In terms of biological role, involved in oocyte maturation. The protein is Oocyte-secreted protein 2 (OOSP2) of Homo sapiens (Human).